Reading from the N-terminus, the 365-residue chain is DNA replication and repair protein RecF (365 aa).

An ATP-binding site is contributed by 30 to 37 (GDNGEGKT).

This sequence belongs to the RecF family.

The protein resides in the cytoplasm. In terms of biological role, the RecF protein is involved in DNA metabolism; it is required for DNA replication and normal SOS inducibility. RecF binds preferentially to single-stranded, linear DNA. It also seems to bind ATP. This chain is DNA replication and repair protein RecF, found in Leptospira borgpetersenii serovar Hardjo-bovis (strain JB197).